The sequence spans 296 residues: 4-hydroxy-tetrahydrodipicolinate synthase (296 aa).

Thr-44 is a pyruvate binding site. Tyr-132 serves as the catalytic Proton donor/acceptor. The Schiff-base intermediate with substrate role is filled by Lys-162. Ile-204 contributes to the pyruvate binding site.

It belongs to the DapA family. As to quaternary structure, homotetramer; dimer of dimers.

The protein localises to the cytoplasm. The enzyme catalyses L-aspartate 4-semialdehyde + pyruvate = (2S,4S)-4-hydroxy-2,3,4,5-tetrahydrodipicolinate + H2O + H(+). The protein operates within amino-acid biosynthesis; L-lysine biosynthesis via DAP pathway; (S)-tetrahydrodipicolinate from L-aspartate: step 3/4. Its function is as follows. Catalyzes the condensation of (S)-aspartate-beta-semialdehyde [(S)-ASA] and pyruvate to 4-hydroxy-tetrahydrodipicolinate (HTPA). In Novosphingobium aromaticivorans (strain ATCC 700278 / DSM 12444 / CCUG 56034 / CIP 105152 / NBRC 16084 / F199), this protein is 4-hydroxy-tetrahydrodipicolinate synthase.